A 457-amino-acid chain; its full sequence is tRNA(Ile)-lysidine synthase (457 aa).

ATP is bound at residue 27 to 32 (SGGLDS).

The protein belongs to the tRNA(Ile)-lysidine synthase family.

It is found in the cytoplasm. The enzyme catalyses cytidine(34) in tRNA(Ile2) + L-lysine + ATP = lysidine(34) in tRNA(Ile2) + AMP + diphosphate + H(+). In terms of biological role, ligates lysine onto the cytidine present at position 34 of the AUA codon-specific tRNA(Ile) that contains the anticodon CAU, in an ATP-dependent manner. Cytidine is converted to lysidine, thus changing the amino acid specificity of the tRNA from methionine to isoleucine. The polypeptide is tRNA(Ile)-lysidine synthase (Hamiltonella defensa subsp. Acyrthosiphon pisum (strain 5AT)).